Here is a 333-residue protein sequence, read N- to C-terminus: 5-formaminoimidazole-4-carboxamide-1-(beta)-D-ribofuranosyl 5'-monophosphate synthetase (333 aa).

2 residues coordinate 5-amino-1-(5-phospho-beta-D-ribosyl)imidazole-4-carboxamide: H10 and S70. Residues 91 to 324 form the ATP-grasp domain; the sequence is KEVLKWESDR…IAREIKIAIE (234 aa). Residues 121–181 and E203 each bind ATP; that span reads PDDI…VPIY. N231 contacts 5-amino-1-(5-phospho-beta-D-ribosyl)imidazole-4-carboxamide. Residues E269 and E282 each coordinate Mg(2+).

It belongs to the phosphohexose mutase family. Mg(2+) is required as a cofactor. Requires Mn(2+) as cofactor.

It catalyses the reaction 5-amino-1-(5-phospho-beta-D-ribosyl)imidazole-4-carboxamide + formate + ATP = 5-formamido-1-(5-phospho-D-ribosyl)imidazole-4-carboxamide + ADP + phosphate. It functions in the pathway purine metabolism; IMP biosynthesis via de novo pathway; 5-formamido-1-(5-phospho-D-ribosyl)imidazole-4-carboxamide from 5-amino-1-(5-phospho-D-ribosyl)imidazole-4-carboxamide (formate route): step 1/1. In terms of biological role, catalyzes the ATP- and formate-dependent formylation of 5-aminoimidazole-4-carboxamide-1-beta-d-ribofuranosyl 5'-monophosphate (AICAR) to 5-formaminoimidazole-4-carboxamide-1-beta-d-ribofuranosyl 5'-monophosphate (FAICAR) in the absence of folates. This chain is 5-formaminoimidazole-4-carboxamide-1-(beta)-D-ribofuranosyl 5'-monophosphate synthetase, found in Pyrococcus horikoshii (strain ATCC 700860 / DSM 12428 / JCM 9974 / NBRC 100139 / OT-3).